We begin with the raw amino-acid sequence, 384 residues long: 8-amino-7-oxononanoate synthase (384 aa).

Arg-21 contacts substrate. 108–109 (GF) contacts pyridoxal 5'-phosphate. Residue His-133 coordinates substrate. Pyridoxal 5'-phosphate contacts are provided by Ser-179, His-207, and Thr-233. Lys-236 is subject to N6-(pyridoxal phosphate)lysine. Residue Thr-352 participates in substrate binding.

Belongs to the class-II pyridoxal-phosphate-dependent aminotransferase family. BioF subfamily. Homodimer. The cofactor is pyridoxal 5'-phosphate.

It catalyses the reaction 6-carboxyhexanoyl-[ACP] + L-alanine + H(+) = (8S)-8-amino-7-oxononanoate + holo-[ACP] + CO2. The protein operates within cofactor biosynthesis; biotin biosynthesis. Catalyzes the decarboxylative condensation of pimeloyl-[acyl-carrier protein] and L-alanine to produce 8-amino-7-oxononanoate (AON), [acyl-carrier protein], and carbon dioxide. In Escherichia coli (strain UTI89 / UPEC), this protein is 8-amino-7-oxononanoate synthase.